The primary structure comprises 186 residues: Phosphopantetheine adenylyltransferase (186 aa).

Thr14 is a binding site for substrate. ATP-binding positions include 14–15 (TF) and His22. Substrate is bound by residues Lys46, Leu78, and Arg92. Residues 93 to 95 (GLR), Glu103, and 128 to 134 (WLYISST) contribute to the ATP site.

Belongs to the bacterial CoaD family. In terms of assembly, homohexamer. Requires Mg(2+) as cofactor.

It is found in the cytoplasm. It carries out the reaction (R)-4'-phosphopantetheine + ATP + H(+) = 3'-dephospho-CoA + diphosphate. It participates in cofactor biosynthesis; coenzyme A biosynthesis; CoA from (R)-pantothenate: step 4/5. Its function is as follows. Reversibly transfers an adenylyl group from ATP to 4'-phosphopantetheine, yielding dephospho-CoA (dPCoA) and pyrophosphate. The polypeptide is Phosphopantetheine adenylyltransferase (Nitratidesulfovibrio vulgaris (strain ATCC 29579 / DSM 644 / CCUG 34227 / NCIMB 8303 / VKM B-1760 / Hildenborough) (Desulfovibrio vulgaris)).